The sequence spans 225 residues: NAD(P)H-hydrate epimerase (225 aa).

One can recognise a YjeF N-terminal domain in the interval 9 to 209; it reads MQTIDNYTVE…DIGLLTPQDF (201 aa). 57 to 61 provides a ligand contact to (6S)-NADPHX; sequence NNGAD. K(+) is bound by residues asparagine 58 and aspartate 119. Residues 123–129 and aspartate 152 each bind (6S)-NADPHX; that span reads GTGLNNL. Threonine 155 contributes to the K(+) binding site.

It belongs to the NnrE/AIBP family. The cofactor is K(+).

It catalyses the reaction (6R)-NADHX = (6S)-NADHX. The enzyme catalyses (6R)-NADPHX = (6S)-NADPHX. In terms of biological role, catalyzes the epimerization of the S- and R-forms of NAD(P)HX, a damaged form of NAD(P)H that is a result of enzymatic or heat-dependent hydration. This is a prerequisite for the S-specific NAD(P)H-hydrate dehydratase to allow the repair of both epimers of NAD(P)HX. The polypeptide is NAD(P)H-hydrate epimerase (Leuconostoc kimchii (strain IMSNU 11154 / KCTC 2386 / IH25)).